We begin with the raw amino-acid sequence, 1186 residues long: DNA-directed RNA polymerase subunit beta (1186 aa).

The tract at residues 1149-1186 is disordered; that stretch reads KEEDDDPSTSSDDLGFNIGARPDAAAKEDQVAEEPEFQ.

This sequence belongs to the RNA polymerase beta chain family. In terms of assembly, the RNAP catalytic core consists of 2 alpha, 1 beta, 1 beta' and 1 omega subunit. When a sigma factor is associated with the core the holoenzyme is formed, which can initiate transcription.

It carries out the reaction RNA(n) + a ribonucleoside 5'-triphosphate = RNA(n+1) + diphosphate. Its function is as follows. DNA-dependent RNA polymerase catalyzes the transcription of DNA into RNA using the four ribonucleoside triphosphates as substrates. In Bifidobacterium adolescentis (strain ATCC 15703 / DSM 20083 / NCTC 11814 / E194a), this protein is DNA-directed RNA polymerase subunit beta.